A 261-amino-acid polypeptide reads, in one-letter code: Glucose 1-dehydrogenase 2 (261 aa).

11 to 35 (VVTGGSKGLGRAMAVRFGQEQSKVV) contacts NADP(+). Serine 145 serves as a coordination point for substrate. Residue tyrosine 158 is the Proton acceptor of the active site.

The protein belongs to the short-chain dehydrogenases/reductases (SDR) family. Homotetramer.

It catalyses the reaction D-glucose + NAD(+) = D-glucono-1,5-lactone + NADH + H(+). It carries out the reaction D-glucose + NADP(+) = D-glucono-1,5-lactone + NADPH + H(+). The protein is Glucose 1-dehydrogenase 2 (gdhII) of Priestia megaterium (Bacillus megaterium).